A 155-amino-acid polypeptide reads, in one-letter code: Putative pre-16S rRNA nuclease (155 aa).

The protein belongs to the YqgF nuclease family.

The protein resides in the cytoplasm. In terms of biological role, could be a nuclease involved in processing of the 5'-end of pre-16S rRNA. This Xanthomonas campestris pv. campestris (strain B100) protein is Putative pre-16S rRNA nuclease.